The following is a 341-amino-acid chain: Killer cell immunoglobulin-like receptor 2DL3 (341 aa).

Positions 1–21 (MSLMVVSMVCVGFFLLQGAWP) are cleaved as a signal peptide. Residues 22 to 245 (HEGVHRKPSL…SETGNPRHLH (224 aa)) are Extracellular-facing. Ig-like C2-type domains follow at residues 42–107 (EETV…VTHS) and 142–205 (GESV…FRDS). Disulfide bonds link C49–C100 and C149–C198. 3 N-linked (GlcNAc...) asparagine glycosylation sites follow: N84, N178, and N211. Residues 220–239 (VTGNPSNSWPSPTEPSSETG) form a disordered region. Residues 223 to 239 (NPSNSWPSPTEPSSETG) are compositionally biased toward low complexity. Residues 246 to 265 (VLIGTSVVIILFILLLFFLL) form a helical membrane-spanning segment. Residues 266-341 (HRWCCNKKNA…VYTELPNAEP (76 aa)) are Cytoplasmic-facing.

This sequence belongs to the immunoglobulin superfamily. As to quaternary structure, interacts with ARRB2.

The protein resides in the cell membrane. Its function is as follows. Receptor on natural killer (NK) cells for HLA-C alleles (HLA-Cw1, HLA-Cw3 and HLA-Cw7). Inhibits the activity of NK cells thus preventing cell lysis. In Homo sapiens (Human), this protein is Killer cell immunoglobulin-like receptor 2DL3.